The chain runs to 87 residues: Small ribosomal subunit protein bS20 (87 aa).

It belongs to the bacterial ribosomal protein bS20 family.

Its function is as follows. Binds directly to 16S ribosomal RNA. The chain is Small ribosomal subunit protein bS20 from Corynebacterium diphtheriae (strain ATCC 700971 / NCTC 13129 / Biotype gravis).